A 355-amino-acid polypeptide reads, in one-letter code: Homeotic protein knotted-1 (355 aa).

The tract at residues 205–233 (KCEGVGSSEEDQDNSGGETELPEIDPRAE) is disordered. One can recognise an ELK domain in the interval 236–256 (ELKNHLLRKYSGYLSSLKQEL). Residues 257 to 320 (SKKKKKGKLP…NQRKRHWKPS (64 aa)) constitute a DNA-binding region (homeobox; TALE-type).

It belongs to the TALE/KNOX homeobox family. Expressed in the apical meristems, in the newly emerged lateral primordia in the floral bud, in their vascular bundles and in the cortex parenchyma of the floral pedicle. Also present in the lateral tips of leaf primordia.

It is found in the nucleus. Its function is as follows. Appears to be involved in meristem formation and in the regulation of leaf morphology. Misexpression makes the leaf more compound which is always associated with growth retardation and loss of apical dominance, resulting in dwarfed, bushy plants. Probably binds to the DNA sequence 5'-TGAC-3'. The chain is Homeotic protein knotted-1 (KN1) from Solanum lycopersicum (Tomato).